Here is a 136-residue protein sequence, read N- to C-terminus: Large ribosomal subunit protein uL16 (136 aa).

This sequence belongs to the universal ribosomal protein uL16 family. As to quaternary structure, part of the 50S ribosomal subunit.

Functionally, binds 23S rRNA and is also seen to make contacts with the A and possibly P site tRNAs. The sequence is that of Large ribosomal subunit protein uL16 from Rickettsia felis (strain ATCC VR-1525 / URRWXCal2) (Rickettsia azadi).